Reading from the N-terminus, the 146-residue chain is Flagellar assembly factor FliW 1 (146 aa).

Belongs to the FliW family. In terms of assembly, interacts with translational regulator CsrA and flagellin(s).

It localises to the cytoplasm. Functionally, acts as an anti-CsrA protein, binds CsrA and prevents it from repressing translation of its target genes, one of which is flagellin. Binds to flagellin and participates in the assembly of the flagellum. The chain is Flagellar assembly factor FliW 1 from Helicobacter hepaticus (strain ATCC 51449 / 3B1).